The primary structure comprises 577 residues: Phosphoethanolamine transferase EptC (577 aa).

5 helical membrane-spanning segments follow: residues 17–37 (LGWALLYFWFFSTLLQAIIYI), 44–64 (NGIRDSLLFSSLWLIPVFLFP), 69–89 (IIAAVIGVVLWAASLAALCYY), 119–139 (YFSLKIVLIALAYTAVAVLLW), and 154–174 (VVSFALLYGLILHPIAMNTFI).

This sequence belongs to the phosphoethanolamine transferase family. EptC/CptA subfamily. Forms a complex with an unidentified protein of approximately 36 kDa.

It localises to the cell inner membrane. It functions in the pathway bacterial outer membrane biogenesis; LPS core biosynthesis. Its function is as follows. Catalyzes the addition of a phosphoethanolamine moiety to the outer membrane lipopolysaccharide core. This Escherichia coli (strain K12) protein is Phosphoethanolamine transferase EptC (eptC).